The following is a 455-amino-acid chain: Gamma-aminobutyric acid receptor subunit alpha-1 (455 aa).

An N-terminal signal peptide occupies residues 1–27; that stretch reads MKKSRGLSDYLWAWTLILSTLSGRSYG. Residues 28–252 are Extracellular-facing; sequence QPSQDELKDN…FHLKRKIGYF (225 aa). The N-linked (GlcNAc...) asparagine glycan is linked to N37. Residue R93 coordinates 4-aminobutanoate. N-linked (GlcNAc...) asparagine glycosylation is present at N137. T156 provides a ligand contact to 4-aminobutanoate. C165 and C179 form a disulfide bridge. The helical transmembrane segment at 253–273 threads the bilayer; sequence VIQTYLPCIMTVILSQVSFWL. Residues 274 to 278 lie on the Cytoplasmic side of the membrane; that stretch reads NRESV. The helical transmembrane segment at 279 to 300 threads the bilayer; the sequence is PARTVFGVTTVLTMTTLSISAR. At 301–310 the chain is on the extracellular side; the sequence is NSLPKVAYAT. Residues 311-332 traverse the membrane as a helical segment; the sequence is AMDWFIAVCYAFVFSALIEFAT. The Cytoplasmic portion of the chain corresponds to 333–420; that stretch reads VNYFTKRGYA…TFNSVSKIDR (88 aa). A helical transmembrane segment spans residues 421-440; the sequence is LSRIAFPLLFGIFNLVYWAT. The Extracellular portion of the chain corresponds to 441-455; it reads YLNREPQLKAPTPHQ.

This sequence belongs to the ligand-gated ion channel (TC 1.A.9) family. Gamma-aminobutyric acid receptor (TC 1.A.9.5) subfamily. GABRA1 sub-subfamily. Heteropentamer, formed by a combination of alpha (GABRA1-6), beta (GABRB1-3), gamma (GABRG1-3), delta (GABRD), epsilon (GABRE), rho (GABRR1-3), pi (GABRP) and theta (GABRQ) subunits, each subunit exhibiting distinct physiological and pharmacological properties. Interacts with UBQLN1. Interacts with TRAK1. Interacts with KIF21B. Identified in a complex of 720 kDa composed of LHFPL4, NLGN2, GABRA1, GABRB2, GABRG2 and GABRB3. Interacts with LHFPL4. Interacts with NLGN2. Interacts with SHISA7; interaction leads to the regulation of GABA(A) receptor trafficking, channel deactivation kinetics and pharmacology. Glycosylated. In terms of tissue distribution, expressed in the cerebellum.

It localises to the postsynaptic cell membrane. Its subcellular location is the cell membrane. The protein resides in the cytoplasmic vesicle membrane. The enzyme catalyses chloride(in) = chloride(out). With respect to regulation, allosterically activated by benzodiazepines, the neuroanesthetic alphaxalone and pentobarbital. Inhibited by the antagonist bicuculline. Potentiated by histamine. Functionally, alpha subunit of the heteropentameric ligand-gated chloride channel gated by Gamma-aminobutyric acid (GABA), a major inhibitory neurotransmitter in the brain. GABA-gated chloride channels, also named GABA(A) receptors (GABAAR), consist of five subunits arranged around a central pore and contain GABA active binding site(s) located at the alpha and beta subunit interface(s). When activated by GABA, GABAARs selectively allow the flow of chloride anions across the cell membrane down their electrochemical gradient. Alpha-1/GABRA1-containing GABAARs are largely synaptic. Chloride influx into the postsynaptic neuron following GABAAR opening decreases the neuron ability to generate a new action potential, thereby reducing nerve transmission. GABAARs containing alpha-1 and beta-2 or -3 subunits exhibit synaptogenic activity; the gamma-2 subunit being necessary but not sufficient to induce rapid synaptic contacts formation. GABAARs function also as histamine receptor where histamine binds at the interface of two neighboring beta subunits and potentiates GABA response. GABAARs containing alpha, beta and epsilon subunits also permit spontaneous chloride channel activity while preserving the structural information required for GABA-gated openings. Alpha-1-mediated plasticity in the orbitofrontal cortex regulates context-dependent action selection. Together with rho subunits, may also control neuronal and glial GABAergic transmission in the cerebellum. The sequence is that of Gamma-aminobutyric acid receptor subunit alpha-1 from Mus musculus (Mouse).